The following is a 133-amino-acid chain: 6,7-dimethyl-8-ribityllumazine synthase (133 aa).

Residues phenylalanine 11, 43–45 (AYD), and 67–69 (AIV) each bind 5-amino-6-(D-ribitylamino)uracil. 72–73 (DT) contributes to the (2S)-2-hydroxy-3-oxobutyl phosphate binding site. Histidine 75 (proton donor) is an active-site residue. Position 100 (phenylalanine 100) interacts with 5-amino-6-(D-ribitylamino)uracil. Residue arginine 115 participates in (2S)-2-hydroxy-3-oxobutyl phosphate binding.

This sequence belongs to the DMRL synthase family.

The enzyme catalyses (2S)-2-hydroxy-3-oxobutyl phosphate + 5-amino-6-(D-ribitylamino)uracil = 6,7-dimethyl-8-(1-D-ribityl)lumazine + phosphate + 2 H2O + H(+). The protein operates within cofactor biosynthesis; riboflavin biosynthesis; riboflavin from 2-hydroxy-3-oxobutyl phosphate and 5-amino-6-(D-ribitylamino)uracil: step 1/2. In terms of biological role, catalyzes the formation of 6,7-dimethyl-8-ribityllumazine by condensation of 5-amino-6-(D-ribitylamino)uracil with 3,4-dihydroxy-2-butanone 4-phosphate. This is the penultimate step in the biosynthesis of riboflavin. This is 6,7-dimethyl-8-ribityllumazine synthase from Halobacterium salinarum (strain ATCC 29341 / DSM 671 / R1).